We begin with the raw amino-acid sequence, 467 residues long: UDP-N-acetylmuramate--L-alanine ligase (467 aa).

114–120 is a binding site for ATP; sequence GTHGKTT.

Belongs to the MurCDEF family.

It is found in the cytoplasm. The enzyme catalyses UDP-N-acetyl-alpha-D-muramate + L-alanine + ATP = UDP-N-acetyl-alpha-D-muramoyl-L-alanine + ADP + phosphate + H(+). Its pathway is cell wall biogenesis; peptidoglycan biosynthesis. Cell wall formation. This Nitrobacter winogradskyi (strain ATCC 25391 / DSM 10237 / CIP 104748 / NCIMB 11846 / Nb-255) protein is UDP-N-acetylmuramate--L-alanine ligase.